A 69-amino-acid chain; its full sequence is uncharacterized protein (69 aa).

Positions 1–16 (MKKIMLFLAMTSILSA) are cleaved as a signal peptide. The N-palmitoyl cysteine moiety is linked to residue Cys17. The S-diacylglycerol cysteine moiety is linked to residue Cys17.

The protein resides in the cell membrane. This is an uncharacterized protein from Bacillus subtilis (strain 168).